Here is a 485-residue protein sequence, read N- to C-terminus: Inosine-5'-monophosphate dehydrogenase (485 aa).

CBS domains lie at 95-154 (VITN…IDDV) and 155-215 (MTKE…AKDS). NAD(+) is bound by residues aspartate 249 and 299-301 (GIG). K(+)-binding residues include glycine 301 and glycine 303. Serine 304 contributes to the IMP binding site. A K(+)-binding site is contributed by cysteine 306. The Thioimidate intermediate role is filled by cysteine 306. Residues 339 to 341 (DGG), 362 to 363 (GS), and 386 to 390 (YRGMG) each bind IMP. Catalysis depends on arginine 402, which acts as the Proton acceptor. Glutamate 414 lines the IMP pocket. Residues glutamate 468, serine 469, and histidine 470 each contribute to the K(+) site.

It belongs to the IMPDH/GMPR family. In terms of assembly, homotetramer. K(+) is required as a cofactor.

The enzyme catalyses IMP + NAD(+) + H2O = XMP + NADH + H(+). It participates in purine metabolism; XMP biosynthesis via de novo pathway; XMP from IMP: step 1/1. Mycophenolic acid (MPA) is a non-competitive inhibitor that prevents formation of the closed enzyme conformation by binding to the same site as the amobile flap. In contrast, mizoribine monophosphate (MZP) is a competitive inhibitor that induces the closed conformation. MPA is a potent inhibitor of mammalian IMPDHs but a poor inhibitor of the bacterial enzymes. MZP is a more potent inhibitor of bacterial IMPDH. In terms of biological role, catalyzes the conversion of inosine 5'-phosphate (IMP) to xanthosine 5'-phosphate (XMP), the first committed and rate-limiting step in the de novo synthesis of guanine nucleotides, and therefore plays an important role in the regulation of cell growth. The chain is Inosine-5'-monophosphate dehydrogenase from Halalkalibacterium halodurans (strain ATCC BAA-125 / DSM 18197 / FERM 7344 / JCM 9153 / C-125) (Bacillus halodurans).